Consider the following 450-residue polypeptide: Molybdate-anion transporter (450 aa).

12 consecutive transmembrane segments (helical) span residues 1 to 21 (MLVTAYLSFVGLLASCLGLEL), 38 to 58 (FLQFQLDFYQVYFLALAADWL), 79 to 99 (ILYVCGLASTVLFGLVASSLV), 128 to 148 (FVLLVGRALGGLSTALLFSAF), 167 to 187 (IPATFARAAFWNHVLAVAAGV), 191 to 211 (AVASWIGLGPVAPFVAAIPLL), 249 to 269 (VLLLGVIQALFESVIFIFVFL), 278 to 298 (GAPLGIVFSSFMAASLLGSSL), 311 to 331 (PMHLLSLAVLIVVFSLFMLTF), 344 to 364 (FIAFLLIELACGLYFPSMSFL), 376 to 396 (GVLNWFRVPLHLLACLGLLVL), and 409 to 429 (FSICSAVMVTTLLAVAGLFTV).

The protein belongs to the major facilitator superfamily.

It is found in the cell membrane. In terms of biological role, mediates high-affinity intracellular uptake of the rare oligo-element molybdenum. The polypeptide is Molybdate-anion transporter (Mfsd5) (Mus musculus (Mouse)).